The following is a 394-amino-acid chain: Elongation factor Tu-A (394 aa).

A tr-type G domain is found at 10-204 (KPHVNVGTIG…HLDTYIPEPQ (195 aa)). Residues 19-26 (GHVDHGKT) form a G1 region. Residue 19 to 26 (GHVDHGKT) coordinates GTP. T26 is a Mg(2+) binding site. Residues 60-64 (GITIN) are G2. The G3 stretch occupies residues 81–84 (DCPG). Residues 81-85 (DCPGH) and 136-139 (NKCD) each bind GTP. Residues 136 to 139 (NKCD) form a G4 region. Positions 174–176 (SAL) are G5.

The protein belongs to the TRAFAC class translation factor GTPase superfamily. Classic translation factor GTPase family. EF-Tu/EF-1A subfamily. As to quaternary structure, monomer.

Its subcellular location is the cytoplasm. The enzyme catalyses GTP + H2O = GDP + phosphate + H(+). Functionally, GTP hydrolase that promotes the GTP-dependent binding of aminoacyl-tRNA to the A-site of ribosomes during protein biosynthesis. In Pasteurella multocida (strain Pm70), this protein is Elongation factor Tu-A.